The sequence spans 359 residues: MNIYDQLQAVEDRYEELGELLSDPEVVSDTKRFMELSREEANTRETVIAYREYKQVIQNISDAEEMIKEASGDADLEEMAKEELKKSKAAKEEYEERLKILLLPKDPNDDKNIILEIRGAAGGDEAALFAGDLLAMYQKYAETQGWRFEVMEASYNGVGGIKEVVAMVSGESVYSKLKYESGAHRVQRVPVTESQGRVHTSTATVLVMPEVEEMEYEIDPKDLRVDIYHASGAGGQNVNKVATAVRMVHIPTGIKVEMQEERTQQKNRDKALKIIRARVADHFAQIAQDEQDAERKSTVGTGDRSERIRTYNFPQNRVTDHRIGLTLQKLDTILAGKMDEVIDALVLYDQTQKLEELNK.

N5-methylglutamine is present on Q236.

This sequence belongs to the prokaryotic/mitochondrial release factor family. Post-translationally, methylated by PrmC. Methylation increases the termination efficiency of RF1.

It localises to the cytoplasm. Functionally, peptide chain release factor 1 directs the termination of translation in response to the peptide chain termination codons UAG and UAA. The sequence is that of Peptide chain release factor 1 from Streptococcus thermophilus (strain ATCC BAA-250 / LMG 18311).